The sequence spans 138 residues: F-box protein At4g12382 (138 aa).

The 47-residue stretch at 7–53 (NPSFADLPSSLIEVIMSHLALKNNIRASAACKSWYEVGVSVRVVEKH) folds into the F-box domain.

In Arabidopsis thaliana (Mouse-ear cress), this protein is F-box protein At4g12382.